Consider the following 163-residue polypeptide: RNA pyrophosphohydrolase (163 aa).

A Nudix hydrolase domain is found at 6 to 149 (GYRLNVGIVI…KRDVYRQVMK (144 aa)). The Nudix box motif lies at 38 to 59 (GGIHLTESPEEAMYRELFEELG).

The protein belongs to the Nudix hydrolase family. RppH subfamily. Requires a divalent metal cation as cofactor.

Its function is as follows. Accelerates the degradation of transcripts by removing pyrophosphate from the 5'-end of triphosphorylated RNA, leading to a more labile monophosphorylated state that can stimulate subsequent ribonuclease cleavage. The chain is RNA pyrophosphohydrolase from Hamiltonella defensa subsp. Acyrthosiphon pisum (strain 5AT).